Consider the following 534-residue polypeptide: Serine/threonine-protein phosphatase 2B catalytic subunit (534 aa).

The Fe cation site is built by aspartate 88, histidine 90, and aspartate 116. The Zn(2+) site is built by aspartate 116 and asparagine 148. Residue histidine 149 is the Proton donor of the active site. 2 residues coordinate Zn(2+): histidine 197 and histidine 279. Disordered regions lie at residues 375–398 (LEDE…DVES) and 475–534 (PSHE…TREA). Basic and acidic residues-rich tracts occupy residues 475-497 (PSHE…RAQQ) and 524-534 (QRDAARETREA).

Belongs to the PPP phosphatase family. PP-2B subfamily. In terms of assembly, composed of two components (A and B), the A component is the catalytic subunit and the B component confers calcium sensitivity. Fe(3+) is required as a cofactor. Requires Zn(2+) as cofactor.

The enzyme catalyses O-phospho-L-seryl-[protein] + H2O = L-seryl-[protein] + phosphate. It carries out the reaction O-phospho-L-threonyl-[protein] + H2O = L-threonyl-[protein] + phosphate. In terms of biological role, calcium-dependent, calmodulin-stimulated protein phosphatase. This subunit may have a role in the calmodulin activation of calcineurin. In Aspergillus fumigatus (strain ATCC MYA-4609 / CBS 101355 / FGSC A1100 / Af293) (Neosartorya fumigata), this protein is Serine/threonine-protein phosphatase 2B catalytic subunit (cnaA).